The primary structure comprises 248 residues: Large ribosomal subunit protein uL4 (248 aa).

Disordered regions lie at residues 72–103 (RSENVARRVPNAVSGRAAHPPKAEKDQTKSLN) and 173–210 (GRSVRAGRGKTRGRKYSQPKSVLVVTSEEPSRAARNLS). The span at 92 to 103 (PKAEKDQTKSLN) shows a compositional bias: basic and acidic residues. Positions 177-189 (RAGRGKTRGRKYS) are enriched in basic residues.

Belongs to the universal ribosomal protein uL4 family. As to quaternary structure, part of the 50S ribosomal subunit.

In terms of biological role, one of the primary rRNA binding proteins, this protein initially binds near the 5'-end of the 23S rRNA. It is important during the early stages of 50S assembly. It makes multiple contacts with different domains of the 23S rRNA in the assembled 50S subunit and ribosome. Forms part of the polypeptide exit tunnel. This chain is Large ribosomal subunit protein uL4, found in Halorubrum lacusprofundi (strain ATCC 49239 / DSM 5036 / JCM 8891 / ACAM 34).